Here is a 152-residue protein sequence, read N- to C-terminus: Protein-export protein SecB (152 aa).

This sequence belongs to the SecB family. Homotetramer, a dimer of dimers. One homotetramer interacts with 1 SecA dimer.

Its subcellular location is the cytoplasm. In terms of biological role, one of the proteins required for the normal export of preproteins out of the cell cytoplasm. It is a molecular chaperone that binds to a subset of precursor proteins, maintaining them in a translocation-competent state. It also specifically binds to its receptor SecA. In Rickettsia peacockii (strain Rustic), this protein is Protein-export protein SecB.